A 113-amino-acid polypeptide reads, in one-letter code: uncharacterized protein (113 aa).

The protein localises to the mitochondrion. This is an uncharacterized protein from Paramecium tetraurelia.